Consider the following 3535-residue polypeptide: Lysosomal-trafficking regulator (3535 aa).

Residues methionine 412–glutamine 436 are disordered. The WD 1 repeat unit spans residues threonine 689–glutamate 736. Over residues serine 1066–serine 1096 the composition is skewed to polar residues. 2 disordered regions span residues serine 1066 to valine 1132 and glycine 1592 to glycine 1613. Low complexity predominate over residues proline 1596 to threonine 1610. The BEACH-type PH domain occupies serine 2686 to valine 2784. A BEACH domain is found at valine 2784–serine 3081. The disordered stretch occupies residues glycine 3254 to glycine 3287. Positions serine 3273–serine 3285 are enriched in low complexity. WD repeat units follow at residues arginine 3307–threonine 3346, valine 3442–glutamate 3486, and threonine 3489–proline 3527.

In terms of assembly, interacts with Rab5; the interaction is independent of GDP or GTP. Interacts with msps.

It localises to the vesicle. The protein resides in the cytoplasm. It is found in the cytoskeleton. Its subcellular location is the spindle. The protein localises to the spindle pole. Functionally, adapter protein that regulates intracellular membrane fusion reactions. Regulates the fusion of lysosome-related organelles. Promotes microtubules nucleation and centrosomal recruitment of microtubule nucleating proteins such as msps. In syncytial embryos, during the formation of yolk granules, suppresses vesicle fusion events with lipid droplets, possibly via interaction with Rab5. In the eye, regulates pigment granules size. In hemocytes, required for the late steps of bacteria phagocytosis. In fat body, required for autophagosome maturation. The polypeptide is Lysosomal-trafficking regulator (Drosophila melanogaster (Fruit fly)).